A 413-amino-acid polypeptide reads, in one-letter code: Probable alpha-tubulin polyglutamylase Ttll1 (413 aa).

The TTL domain occupies 2–370 (ASKKLKYKTD…DDWNDDSSKT (369 aa)). ATP contacts are provided by residues 184–187 (SRYI), Lys197, and Asp199.

It belongs to the tubulin polyglutamylase family.

Its subcellular location is the cytoplasm. It is found in the cytoskeleton. It localises to the cilium basal body. The protein localises to the contractile vacuole. In terms of biological role, probable tubulin polyglutamylase with a strong preference for alpha-tubulin. Modifies alpha-tubulin, generating side chains of glutamate on the gamma-carboxyl groups of specific glutamate residues within the C-terminal tail of alpha-tubulin. This Tetrahymena thermophila (strain SB210) protein is Probable alpha-tubulin polyglutamylase Ttll1 (Ttll1).